Here is a 378-residue protein sequence, read N- to C-terminus: Ribosomal RNA large subunit methyltransferase G (378 aa).

The protein belongs to the methyltransferase superfamily. RlmG family.

The protein resides in the cytoplasm. The enzyme catalyses guanosine(1835) in 23S rRNA + S-adenosyl-L-methionine = N(2)-methylguanosine(1835) in 23S rRNA + S-adenosyl-L-homocysteine + H(+). In terms of biological role, specifically methylates the guanine in position 1835 (m2G1835) of 23S rRNA. The chain is Ribosomal RNA large subunit methyltransferase G from Shewanella baltica (strain OS155 / ATCC BAA-1091).